The following is a 132-amino-acid chain: Agouti-signaling protein (132 aa).

A signal peptide spans 1-22 (MDVTRLLLATLLVFLCFFTAYS). Asn39 carries N-linked (GlcNAc...) asparagine glycosylation. The tract at residues 58–88 (KSKQMSRKEAEKKRSSKKEASMKKVARPRTP) is disordered. A compositionally biased stretch (basic and acidic residues) spans 63–79 (SRKEAEKKRSSKKEASM). Cystine bridges form between Cys93–Cys108, Cys100–Cys114, Cys107–Cys125, Cys111–Cys132, and Cys116–Cys123. The Agouti domain occupies 93 to 132 (CVATRDSCKPPAPACCDPCASCQCRFFRSACSCRVLSLNC).

The protein resides in the secreted. Its function is as follows. Involved in the regulation of melanogenesis. The binding of ASP to MC1R precludes alpha-MSH initiated signaling and thus blocks production of cAMP, leading to a down-regulation of eumelanogenesis (brown/black pigment) and thus increasing synthesis of pheomelanin (yellow/red pigment). The polypeptide is Agouti-signaling protein (ASIP) (Cercopithecus mitis (Blue monkey)).